The sequence spans 692 residues: MGKVIGIDLGTTNSCASVLEGGKPIVITNTEGGRTTPSIVGFTKGSQRLVGQLAKRQSVTNAENTVYSIKRFIGRRWDDTVEERSRVPYNCVKGRDDTVSVSIRGQSYTPQEISAMILQKLKADSEAFLGEPVTQAVITVPAYFTDAQRQATKDAGTIAGLEVLRIINEPTAAALAYGLDKQETEELILVFDLGGGTFDVSLLQLGNGVFEVLSTSGNNHLGGDDFDNCVVQWMAESFKQKENIDLSTDKMAIQRLREAAEKAKIELSSMLNTTINLPFITADESGPKHLEMELARSQFEELTKQLLEDTRVPLTQALDDGEIRASDVHRVILVGGSTRIPAIQRVIQEFFPDSQLERSVNPDEAVALGAAIQAGVIGGEVEDVLLLDVTPLSLGLETLGEVTTKIIERNTTIPTSRSEVFSTAVDGQTSVEIHVIQGERAMARDNKSLGKFLLAGIPPAPRGMPQIEVSFEIDVNGILKVSAQDQGTGKEQSIVISHTGGLSGGEIEKMRQEAQQYAAQDQLRLRMMELQNQADSLFHTYETTLQESGELVREELKSSGKQKKDQLAIALRTPNTPVEKLQTLVEEFRQIILLIGTEVYQQGKGAASNEFANFVQGTSSGTSQMIESLETNLNPIQASSGITMTPGTMINGTVNPGGMDYVETAPVYGLDDGEEFDFDADETVYSDYEAID.

T197 carries the phosphothreonine; by autocatalysis modification.

The protein belongs to the heat shock protein 70 family.

Its function is as follows. Acts as a chaperone. The chain is Chaperone protein dnaK1 (dnaK1) from Synechocystis sp. (strain ATCC 27184 / PCC 6803 / Kazusa).